Consider the following 99-residue polypeptide: Putative membrane protein insertion efficiency factor (99 aa).

The protein belongs to the UPF0161 family.

It localises to the cell membrane. In terms of biological role, could be involved in insertion of integral membrane proteins into the membrane. The chain is Putative membrane protein insertion efficiency factor from Corynebacterium glutamicum (strain ATCC 13032 / DSM 20300 / JCM 1318 / BCRC 11384 / CCUG 27702 / LMG 3730 / NBRC 12168 / NCIMB 10025 / NRRL B-2784 / 534).